Reading from the N-terminus, the 190-residue chain is Putative transcription factor ovo-like protein 3 (190 aa).

2 disordered regions span residues 1–21 (MPRA…GHLP) and 35–65 (SLGG…SAPR). Residues 41–62 (AQQSSSVRDPWTAQPTQGNLTS) show a composition bias toward polar residues. 4 consecutive C2H2-type zinc fingers follow at residues 70 to 92 (LGCP…LKCH), 98 to 120 (HLCR…MRTH), 126 to 149 (FRCS…AKVH), and 165 to 187 (HVCE…RALH).

Belongs to the krueppel C2H2-type zinc-finger protein family.

The protein resides in the nucleus. Functionally, may act as a transcription regulator. The polypeptide is Putative transcription factor ovo-like protein 3 (OVOL3) (Homo sapiens (Human)).